The chain runs to 77 residues: Large ribosomal subunit protein uL29 (77 aa).

Belongs to the universal ribosomal protein uL29 family.

This Mycolicibacterium gilvum (strain PYR-GCK) (Mycobacterium gilvum (strain PYR-GCK)) protein is Large ribosomal subunit protein uL29.